Reading from the N-terminus, the 858-residue chain is NEDD4-binding protein 1 (858 aa).

A disordered region spans residues 17 to 37; the sequence is TCTEPPGGRQSPTASRAQPDS. Positions 26–37 are enriched in polar residues; it reads QSPTASRAQPDS. In terms of domain architecture, KH-like spans 96–180; that stretch reads KEDVYKAKEY…VQQFVALFQE (85 aa). Disordered stretches follow at residues 262-321 and 388-424; these read EDKT…TWTV and QKTQ…KEKE. The segment covering 285 to 316 has biased composition (basic and acidic residues); the sequence is RSSESEQRDTKRQYSLERREEEQCEEREREPT. Positions 389–418 are enriched in polar residues; that stretch reads KTQSTQGAQRTSRTPDPSPCANASSTSTSN. In terms of domain architecture, RNase NYN spans 598-750; sequence LRHIIIDGSN…LGKHGPHLDE (153 aa). The span at 774 to 784 shows a compositional bias: polar residues; that stretch reads SVYSQAAQSTA. The tract at residues 774–823 is disordered; that stretch reads SVYSQAAQSTAHPSSPSHWPHSGPPDWHLPRPSPSPPPQRSPSETTELKR. Over residues 785-799 the composition is skewed to low complexity; it reads HPSSPSHWPHSGPPD. Positions 804-813 are enriched in pro residues; it reads RPSPSPPPQR. Positions 813-858 are coCUN; that stretch reads RSPSETTELKRKLYDIFPDQKQRIDRILSDNPYMRDLNALSGLLLG.

Belongs to the N4BP1 family.

It is found in the nucleus. The protein localises to the nucleolus. It localises to the PML body. In terms of biological role, potent suppressor of cytokine production that acts as a regulator of innate immune signaling and inflammation. Acts as a key negative regulator of select cytokine and chemokine responses elicited by TRIF-independent Toll-like receptors (TLRs), thereby limiting inflammatory cytokine responses to minor insults. Has ribonuclease activity. This chain is NEDD4-binding protein 1, found in Danio rerio (Zebrafish).